The chain runs to 313 residues: Putative stilbene synthase 2 (313 aa).

Cys-88 is an active-site residue. Substrate is bound by residues Leu-191 and 229–231 (GGP).

This sequence belongs to the thiolase-like superfamily. Chalcone/stilbene synthases family. In terms of assembly, homodimer.

The protein resides in the cytoplasm. It catalyses the reaction 4-coumaroyl-CoA + 3 malonyl-CoA + 3 H(+) = trans-resveratrol + 4 CO2 + 4 CoA. Its pathway is phytoalexin biosynthesis; 3,4',5-trihydroxystilbene biosynthesis; 3,4',5-trihydroxystilbene from trans-4-coumarate: step 2/2. The polypeptide is Putative stilbene synthase 2 (Arachis hypogaea (Peanut)).